The sequence spans 337 residues: U11/U12 small nuclear ribonucleoprotein 48 kDa protein (337 aa).

The CHHC U11-48K-type zinc-finger motif lies at 55–82 (IAICPYDSNHRMPKSSLTKHMESCRLRK). Zn(2+)-binding residues include cysteine 58, histidine 64, histidine 74, and cysteine 78. Residues lysine 87 and lysine 104 each participate in a glycyl lysine isopeptide (Lys-Gly) (interchain with G-Cter in SUMO2) cross-link. Residues 255–276 (HWQEEQGRAGDAAEKNEERRSA) are compositionally biased toward basic and acidic residues. A disordered region spans residues 255-337 (HWQEEQGRAG…HSHKRRKQKI (83 aa)). Over residues 294 to 310 (RHRRARSRSPHKRKRNK) the composition is skewed to basic residues. The segment covering 311–326 (DKSSESRRRKERDGER) has biased composition (basic and acidic residues). Residues 327–337 (HHSHKRRKQKI) are compositionally biased toward basic residues.

In terms of assembly, component of the U11/U12 snRNPs that are part of the U12-type spliceosome. Not found in the major spliceosome.

The protein resides in the nucleus. Its function is as follows. Likely involved in U12-type 5' splice site recognition. The polypeptide is U11/U12 small nuclear ribonucleoprotein 48 kDa protein (Snrnp48) (Mus musculus (Mouse)).